Consider the following 420-residue polypeptide: Probable serine hydroxymethyltransferase (420 aa).

Residues L121 and 125 to 127 each bind (6S)-5,6,7,8-tetrahydrofolate; that span reads GHL. N6-(pyridoxal phosphate)lysine is present on K230. (6S)-5,6,7,8-tetrahydrofolate-binding positions include E246 and 354–356; that span reads SPF.

It belongs to the SHMT family. As to quaternary structure, homodimer. It depends on pyridoxal 5'-phosphate as a cofactor.

The protein localises to the cytoplasm. It catalyses the reaction (6R)-5,10-methylene-5,6,7,8-tetrahydrofolate + glycine + H2O = (6S)-5,6,7,8-tetrahydrofolate + L-serine. Its pathway is one-carbon metabolism; tetrahydrofolate interconversion. In terms of biological role, catalyzes the reversible interconversion of serine and glycine with tetrahydrofolate (THF) serving as the one-carbon carrier. This reaction serves as the major source of one-carbon groups required for the biosynthesis of purines, thymidylate, methionine, and other important biomolecules. This is Probable serine hydroxymethyltransferase from Rickettsia bellii (strain RML369-C).